The chain runs to 553 residues: Telomere repeat-binding protein 2 (553 aa).

The interval 147–170 is disordered; sequence SSTEVGACGNGSPNESRDDVNLFS. In terms of domain architecture, Ubiquitin-like spans 285–364; it reads VKLRIKSFRV…HLDSLGFSLE (80 aa). The interval 394–413 is disordered; that stretch reads ALDSSHEPEPSPADSFGKLG. The 60-residue stretch at 448–507 folds into the HTH myb-type domain; it reads AQRRIRRPFSVTEVEALVQAVEKLGTGRWRDVKVRAFEDADHRTYVDLKDKWKTLVHTAR. Residues 476–503 constitute a DNA-binding region (H-T-H motif); sequence WRDVKVRAFEDADHRTYVDLKDKWKTLV.

In terms of assembly, homodimer and heterodimer with TRP1. Interacts with SNL1. Expressed ubiquitously. Highest expression in flowers and leaves.

The protein resides in the nucleus. Its function is as follows. Binds specifically to the plant telomeric double-stranded DNA sequences. At least 2 repeats of telomeric sequences are required for binding. Induces DNA bending. This Arabidopsis thaliana (Mouse-ear cress) protein is Telomere repeat-binding protein 2 (TRP2).